We begin with the raw amino-acid sequence, 241 residues long: tRNA pseudouridine synthase B (241 aa).

D45 acts as the Nucleophile in catalysis.

This sequence belongs to the pseudouridine synthase TruB family. Type 1 subfamily.

It catalyses the reaction uridine(55) in tRNA = pseudouridine(55) in tRNA. Functionally, responsible for synthesis of pseudouridine from uracil-55 in the psi GC loop of transfer RNAs. This is tRNA pseudouridine synthase B from Chlamydia trachomatis serovar L2 (strain ATCC VR-902B / DSM 19102 / 434/Bu).